Reading from the N-terminus, the 1330-residue chain is MPLPLPSRSSKPETKKSRSSKIVPSGNNGQSEKRGENYQEKISSSSPRRLCKKRSAFEDLTNASQSQPAQLKKEANKEFVKDVPKKIKGNTPALGLAKSNEVNMVSYKLESSPGVVSTTLVPNITEKPLILERSTTSGTITTEEASFFRKPLILKEESTTEDTGLIKRSLFLKKFTNKGEISLMEKPTSVQEEADSNDEFVVKLITFGKKHKTEEVAITKGTLSLKKMCTYQEDLALQDITVEENSFFMEPTNFRKKPKTDDVTPTKKMLSLKKKKYITLGKVSRMKKPLVLQKTNSEDESPLIKEPLAFKKKPTKKETTFTLRPLSLKKYTTQGKMAHLKKPLESQNTSGEKALIKEPLSFKKKPITKEESLFQEFSASQEKHTTDREVVLLKKPQVLQEEKDSKDKFLMEPMFLRKKCTTKETNPTKKPLPIKKKCTIQGKMYYLKKPLVLQKTTPGEESFVKEPLSFKKNTTELSMLQEKYTTQEEVSVLKKALTLQKTLTEEESHLKEPLAFKKKHTTEEATPTKKLSSLKRKRFTAQGKRSCLMKPLVLQTSSGEKTHIKEPLSFKKRSAIEESFFKESPVLQEKHTMQGEVALLEKPGALQENVSSEDEFLMEPISFRKTHTTNEVVSTKEPLSLKKKKCTTQITMSICQELLDLQNIISKDKASFFMEPVSLREKSLAEEVILTKTPLSLKKKEITQGKIFLLKKPLVSEKTTSEEESLFKKLLPFNKKSTTEGEFLFQDPSVLQEKHTTPQEVSLSTKPLTLPEKTTTEEEPYIKEPLTLEERPTTKEEFLSQEPFSLHAKPTNEDESLFWKALGLQKTQTKEDSLKKLLTLQEKNTTDEESLLNKPSILKEELSTKVATSIEKELSLKKKPTAQGEVFLLKKQLALQENITNEESLIKQPLAFLKPSIEEAILRESLALQEKPRSEEETLFKEPLSFQEKPTLNEAFHFKEIISLNEKHSTGKELSLKEPLALQENPTQKEDTSLEDSLILQVETSSRVPSTPPESRAGMSSVGKLSTTSKSSVCESSSNKPSSSWGESSQKEMTPLEDIDRNHGDPFFNSIYAKDIFSYMKEREEKFILKEYMNKQTDISSCMRAILVDWLVEVQMTFEMSHETLYLAVKLVDHYLMEVICKRDKLQLLGSTAFLIAAKFEEPCPPCVDDFLYICDDIYQRHEMLSMEISILQTLKFDINIPIAYHFLRRYARCLHASMKTLTLSRFICEMTLQEYDYVQERASKLAAGSFLLALYMMKLRYWVPALEYYSGYKTSDLHPLVKQLNILLTLRPSNKLKTVYSKYSHQVFFEATKIPPLDMLKLEEILNYC.

The tract at residues 1–50 (MPLPLPSRSSKPETKKSRSSKIVPSGNNGQSEKRGENYQEKISSSSPRRL) is disordered. Residues 20–30 (SKIVPSGNNGQ) show a composition bias toward polar residues. Positions 54-62 (RSAFEDLTN) match the D-box motif. Positions 1002–1059 (VETSSRVPSTPPESRAGMSSVGKLSTTSKSSVCESSSNKPSSSWGESSQKEMTPLEDI) are disordered. Over residues 1026-1048 (STTSKSSVCESSSNKPSSSWGES) the composition is skewed to low complexity.

This sequence belongs to the cyclin family. Cyclin AB subfamily. As to quaternary structure, interacts with CDK2 kinase. Ubiquitinated. Ubiquitination leads to its degradation during anaphase entry, after degradation of CCNB1.

The protein resides in the nucleus. Its function is as follows. Cyclins are positive regulatory subunits of the cyclin-dependent kinases (CDKs), and thereby play an essential role in the control of the cell cycle, notably via their destruction during cell division. Its tissue specificity suggest that it may be required during early meiotic prophase I. In Canis lupus familiaris (Dog), this protein is G2/mitotic-specific cyclin-B3 (CCNB3).